The primary structure comprises 333 residues: Porphobilinogen deaminase (333 aa).

Cysteine 255 carries the post-translational modification S-(dipyrrolylmethanemethyl)cysteine.

The protein belongs to the HMBS family. In terms of assembly, monomer. Requires dipyrromethane as cofactor.

It carries out the reaction 4 porphobilinogen + H2O = hydroxymethylbilane + 4 NH4(+). It participates in porphyrin-containing compound metabolism; protoporphyrin-IX biosynthesis; coproporphyrinogen-III from 5-aminolevulinate: step 2/4. Tetrapolymerization of the monopyrrole PBG into the hydroxymethylbilane pre-uroporphyrinogen in several discrete steps. The chain is Porphobilinogen deaminase from Burkholderia vietnamiensis (strain G4 / LMG 22486) (Burkholderia cepacia (strain R1808)).